Reading from the N-terminus, the 901-residue chain is Probable inorganic carbon transporter subunit DabA (901 aa).

Zn(2+) contacts are provided by cysteine 424, aspartate 426, histidine 606, and cysteine 621.

This sequence belongs to the inorganic carbon transporter (TC 9.A.2) DabA family. In terms of assembly, forms a complex with DabB. Zn(2+) serves as cofactor.

Its subcellular location is the cell membrane. Part of an energy-coupled inorganic carbon pump. This Staphylococcus aureus (strain USA300) protein is Probable inorganic carbon transporter subunit DabA.